Consider the following 60-residue polypeptide: Large ribosomal subunit protein uL29 (60 aa).

Belongs to the universal ribosomal protein uL29 family.

This chain is Large ribosomal subunit protein uL29, found in Fusobacterium nucleatum subsp. nucleatum (strain ATCC 25586 / DSM 15643 / BCRC 10681 / CIP 101130 / JCM 8532 / KCTC 2640 / LMG 13131 / VPI 4355).